A 293-amino-acid polypeptide reads, in one-letter code: Acetyl-coenzyme A carboxylase carboxyl transferase subunit beta (293 aa).

Positions 29 to 293 (LWSKCPECGL…GCRPMEITSA (265 aa)) constitute a CoA carboxyltransferase N-terminal domain. Residues Cys-33, Cys-36, Cys-52, and Cys-55 each contribute to the Zn(2+) site. The segment at 33–55 (CPECGLVVYVKDLKGNASVCAGC) adopts a C4-type zinc-finger fold.

It belongs to the AccD/PCCB family. Acetyl-CoA carboxylase is a heterohexamer composed of biotin carboxyl carrier protein (AccB), biotin carboxylase (AccC) and two subunits each of ACCase subunit alpha (AccA) and ACCase subunit beta (AccD). Requires Zn(2+) as cofactor.

The protein resides in the cytoplasm. The catalysed reaction is N(6)-carboxybiotinyl-L-lysyl-[protein] + acetyl-CoA = N(6)-biotinyl-L-lysyl-[protein] + malonyl-CoA. Its pathway is lipid metabolism; malonyl-CoA biosynthesis; malonyl-CoA from acetyl-CoA: step 1/1. In terms of biological role, component of the acetyl coenzyme A carboxylase (ACC) complex. Biotin carboxylase (BC) catalyzes the carboxylation of biotin on its carrier protein (BCCP) and then the CO(2) group is transferred by the transcarboxylase to acetyl-CoA to form malonyl-CoA. The sequence is that of Acetyl-coenzyme A carboxylase carboxyl transferase subunit beta from Parasynechococcus marenigrum (strain WH8102).